A 313-amino-acid polypeptide reads, in one-letter code: Jacalin-related lectin 8 (313 aa).

The N-terminal stretch at 1 to 23 (MFIIYLFIFLSSAIIDSNGVAMA) is a signal peptide. Jacalin-type lectin domains lie at 24–163 (QKIE…YVKT) and 165–309 (PTKS…YFSP).

The protein belongs to the jacalin lectin family.

This Arabidopsis thaliana (Mouse-ear cress) protein is Jacalin-related lectin 8 (JAL8).